The chain runs to 638 residues: Factor of DNA methylation 3 (638 aa).

Residues 318 to 497 (FNRIFADHEK…RALISNLRDM (180 aa)) are a coiled coil.

Functionally, acts in association with FDM4 and FDM5 for RNA-directed DNA methylation (RdDM). The sequence is that of Factor of DNA methylation 3 from Arabidopsis thaliana (Mouse-ear cress).